A 179-amino-acid polypeptide reads, in one-letter code: 6,7-dimethyl-8-ribityllumazine synthase (179 aa).

5-amino-6-(D-ribitylamino)uracil-binding positions include W13, 45-47, and 68-70; these read AVE and VVI. 73–74 contacts (2S)-2-hydroxy-3-oxobutyl phosphate; it reads DT. Catalysis depends on H76, which acts as the Proton donor. F101 contributes to the 5-amino-6-(D-ribitylamino)uracil binding site. A (2S)-2-hydroxy-3-oxobutyl phosphate-binding site is contributed by R115. The disordered stretch occupies residues 157–179; it reads AKAAKKPAKAAAKTQKKKKKVRK.

It belongs to the DMRL synthase family.

The catalysed reaction is (2S)-2-hydroxy-3-oxobutyl phosphate + 5-amino-6-(D-ribitylamino)uracil = 6,7-dimethyl-8-(1-D-ribityl)lumazine + phosphate + 2 H2O + H(+). The protein operates within cofactor biosynthesis; riboflavin biosynthesis; riboflavin from 2-hydroxy-3-oxobutyl phosphate and 5-amino-6-(D-ribitylamino)uracil: step 1/2. Catalyzes the formation of 6,7-dimethyl-8-ribityllumazine by condensation of 5-amino-6-(D-ribitylamino)uracil with 3,4-dihydroxy-2-butanone 4-phosphate. This is the penultimate step in the biosynthesis of riboflavin. The protein is 6,7-dimethyl-8-ribityllumazine synthase of Bdellovibrio bacteriovorus (strain ATCC 15356 / DSM 50701 / NCIMB 9529 / HD100).